The following is a 200-amino-acid chain: Glycerol-3-phosphate acyltransferase (200 aa).

5 helical membrane passes run 2–22 (FNISAVAVSYLIGSLSFAVIV), 51–71 (KAAALTLLGDAAKGLVAVLLA), 84–104 (AIAAVALAALVGHMWPVFFGF), 114–134 (LGVLLALSPATALVCALIWLV), and 159–179 (FFMPHTSWIWATLLIALLVLF).

Belongs to the PlsY family. Probably interacts with PlsX.

The protein localises to the cell inner membrane. The catalysed reaction is an acyl phosphate + sn-glycerol 3-phosphate = a 1-acyl-sn-glycero-3-phosphate + phosphate. It participates in lipid metabolism; phospholipid metabolism. Its function is as follows. Catalyzes the transfer of an acyl group from acyl-phosphate (acyl-PO(4)) to glycerol-3-phosphate (G3P) to form lysophosphatidic acid (LPA). This enzyme utilizes acyl-phosphate as fatty acyl donor, but not acyl-CoA or acyl-ACP. The protein is Glycerol-3-phosphate acyltransferase of Neisseria meningitidis serogroup C (strain 053442).